A 130-amino-acid chain; its full sequence is Small ribosomal subunit protein uS9 (130 aa).

The protein belongs to the universal ribosomal protein uS9 family.

This chain is Small ribosomal subunit protein uS9, found in Paraburkholderia phymatum (strain DSM 17167 / CIP 108236 / LMG 21445 / STM815) (Burkholderia phymatum).